A 518-amino-acid chain; its full sequence is MAKFTVTSLERHLLLISTVIAVLAALIVSRGCNYLLKRWKLSAYPLYEDKKVTPIEELHSSRDLIAKGFAKSQGKEIWRINTTIGEVLVVSPKYIEKFRYGHGCSAAAYTERELPISAPGYEPFTFASNEWRQRNADIILHRLTGLVSNRKIELSEELSNALESRWTNSTDWHAVSLFQTMTAIVAQTTQYFFTNRELCRNDAYIQSLFAYSSLAFTEGRSLMKWPRVLHPLVARFHPASQNLQSALENVNKHIFPFVRERRAEISRRRFEAAQSGKETPLADEWVAWLDEKAGNEDYNPGVAMVSFSVASFHTTTDFMCQLLCDLARNPAIIEQLKEEASDVLRDHTWTKSSFARLDLMDRCMKESQRLKPIGAVFLKSRAQKDISVENGNIIPAGSLFVVSGHWMHDPAIYPEPEKFDPGRHLRHAEESKPNKPKQFTAVSPEHMGWGYGKHSCPGRFFAATVAKMLLTHILFKYEFKLPDGKLNQHAYEFTTEILVRRRIEEGALNLDSFDSIDR.

Residues 12–29 (HLLLISTVIAVLAALIVS) traverse the membrane as a helical segment. N-linked (GlcNAc...) asparagine glycans are attached at residues N81 and N168. C456 contacts heme.

This sequence belongs to the cytochrome P450 family. It depends on heme as a cofactor.

It is found in the membrane. Its pathway is mycotoxin biosynthesis. Its function is as follows. Cytochrome P450 monooxygenase; part of the 2 gene clusters that mediate the biosynthesis of fusicoccins, diterpene glucosides that display phytohormone-like activity and function as potent activators of plasma membrane H(+)-ATPases in plants by modifying 14-3-3 proteins and cause the plant disease constriction canker. The first step in the pathway is performed by the fusicoccadiene synthase PaFS that possesses both prenyl transferase and terpene cyclase activity, converting isopentenyl diphosphate and dimethylallyl diphosphate into geranylgeranyl diphosphate (GGDP) and successively converting GGDP into fusicocca-2,10(14)-diene, a precursor for fusicoccin H. The second step is the oxidation at the C-8 position by the cytochrome P450 monooxygenase PaP450-2 to yield fusicocca-2,10(14)-diene-8-beta-ol. The cytochrome P450 monooxygenase PaP450-1 then catalyzes the hydroxylation at the C-16 position to produce fusicocca-2,10(14)-diene-8-beta,16-diol. The dioxygenase fc-dox then catalyzes the 16-oxydation of fusicocca-2,10(14)-diene-8-beta,16-diol to yield an aldehyde (8-beta-hydroxyfusicocca-1,10(14)-dien-16-al). The short-chain dehydrogenase/reductase fc-sdr catalyzes the reduction of the aldehyde to yield fusicocca-1,10(14)-diene-8-beta,16-diol. The next step is the hydroxylation at C-9 performed by the cytochrome P450 monooxygenase PaP450-3 that leads to fusicoccin H aglycon which is glycosylated to fusicoccin H by the O-glycosyltransferase PaGT. Hydroxylation at C-12 by the cytochrome P450 monooxygenase PaP450-4 leads then to the production of fusicoccin Q and is followed by methylation by the O-methyltransferase PaMT to yield fusicoccin P. Fusicoccin P is further converted to fusicoccin J via prenylation by the O-glucose prenyltransferase PaPT. Cytochrome P450 monooxygenase PaP450-5 then performs hydroxylation at C-19 to yield dideacetyl-fusicoccin A which is acetylated to 3'-O-deacetyl-fusicoccin A by the O-acetyltransferase PaAT-2. Finally, a another acetylation by the O-acetyltransferase PaAT-1 yields fusicoccin A. The sequence is that of Fusicoccin H C-9 hydroxylase from Phomopsis amygdali (Fusicoccum amygdali).